Reading from the N-terminus, the 424-residue chain is STAM-binding protein (424 aa).

The tract at residues 1-127 is interaction with CHMP3; that stretch reads MSDHGDVSLP…YEQYKERKKK (127 aa). 2 positions are modified to phosphoserine: serine 2 and serine 48. Residues 227–231 form an interaction with STAM region; it reads PAKPP. Serine 243 carries the post-translational modification Phosphoserine. In terms of domain architecture, MPN spans 257 to 388; that stretch reads IVVPRNLCSE…LTDYGLQEIS (132 aa). The Zn(2+) site is built by histidine 335, histidine 337, aspartate 348, histidine 350, cysteine 390, histidine 396, and histidine 398. Positions 335-348 match the JAMM motif motif; the sequence is HTHPTQTAFLSSVD.

It belongs to the peptidase M67C family. As to quaternary structure, interacts with STAM. Interacts with SMAD6 and SMAD7. Interacts with CHMP3; the interaction appears to relieve the autoinhibition of CHMP3. Interacts with SMURF2 and RNF11; this interaction promotes ubiquitination. It depends on Zn(2+) as a cofactor. In terms of processing, phosphorylated after BMP type I receptor activation. Ubiquitinated by SMURF2 in the presence of RNF11. As to expression, expressed in brain.

It localises to the nucleus. The protein resides in the membrane. The protein localises to the cytoplasm. Its subcellular location is the early endosome. With respect to regulation, inhibited by N-ethylmaleimide. Zinc metalloprotease that specifically cleaves 'Lys-63'-linked polyubiquitin chains. Does not cleave 'Lys-48'-linked polyubiquitin chains. Plays a role in signal transduction for cell growth and MYC induction mediated by IL-2 and GM-CSF. Potentiates BMP (bone morphogenetic protein) signaling by antagonizing the inhibitory action of SMAD6 and SMAD7. Has a key role in regulation of cell surface receptor-mediated endocytosis and ubiquitin-dependent sorting of receptors to lysosomes. Endosomal localization of STAMBP is required for efficient EGFR degradation but not for its internalization. Involved in the negative regulation of PI3K-AKT-mTOR and RAS-MAP signaling pathways. The sequence is that of STAM-binding protein (Stambp) from Mus musculus (Mouse).